Consider the following 225-residue polypeptide: MVTRDRAENRDGPKMLKPLVEKRRRDRINRSLEELRLLLLERTRDQNLRNPKLEKAEILEFAVGYLRERSRVEPPGVPRSPVQDAEALASCYLSGFRECLLRLAAFAHDASPAARAQLFSALHGYLRPKPPRPKPVDPRPPAPRPSLDPAAPALGPALHQRPPVHQGHPSPRCAWSPSLCSPRAGDSGAPAPLTGLLPPPPPPHRQDGAPKAPLPPPPAFWRPWP.

The bHLH domain occupies 12 to 69 (GPKMLKPLVEKRRRDRINRSLEELRLLLLERTRDQNLRNPKLEKAEILEFAVGYLRER). Residues 92-122 (YLSGFRECLLRLAAFAHDASPAARAQLFSAL) enclose the Orange domain. The segment at 125–225 (YLRPKPPRPK…PPPAFWRPWP (101 aa)) is disordered. A compositionally biased stretch (low complexity) spans 147–158 (LDPAAPALGPAL). Positions 212 to 225 (APLPPPPAFWRPWP) are enriched in pro residues. The short motif at 221-224 (WRPW) is the WRPW motif element.

As to quaternary structure, transcription repression requires formation of a complex with a corepressor protein of the Groucho/TLE family.

It localises to the nucleus. Transcriptional repressor. Represses transcription from both N box- and E box-containing promoters. May with HES1, cooperatively regulate somite formation in the presomitic mesoderm (PSM). May function as a segmentation clock, which is essential for coordinated somite segmentation. This is Transcription factor HES-7 (HES7) from Homo sapiens (Human).